A 173-amino-acid chain; its full sequence is Crossover junction endodeoxyribonuclease RuvC (173 aa).

Catalysis depends on residues Asp8, Glu67, and Asp139. Mg(2+) contacts are provided by Asp8, Glu67, and Asp139.

The protein belongs to the RuvC family. In terms of assembly, homodimer which binds Holliday junction (HJ) DNA. The HJ becomes 2-fold symmetrical on binding to RuvC with unstacked arms; it has a different conformation from HJ DNA in complex with RuvA. In the full resolvosome a probable DNA-RuvA(4)-RuvB(12)-RuvC(2) complex forms which resolves the HJ. Mg(2+) is required as a cofactor.

The protein localises to the cytoplasm. The catalysed reaction is Endonucleolytic cleavage at a junction such as a reciprocal single-stranded crossover between two homologous DNA duplexes (Holliday junction).. In terms of biological role, the RuvA-RuvB-RuvC complex processes Holliday junction (HJ) DNA during genetic recombination and DNA repair. Endonuclease that resolves HJ intermediates. Cleaves cruciform DNA by making single-stranded nicks across the HJ at symmetrical positions within the homologous arms, yielding a 5'-phosphate and a 3'-hydroxyl group; requires a central core of homology in the junction. The consensus cleavage sequence is 5'-(A/T)TT(C/G)-3'. Cleavage occurs on the 3'-side of the TT dinucleotide at the point of strand exchange. HJ branch migration catalyzed by RuvA-RuvB allows RuvC to scan DNA until it finds its consensus sequence, where it cleaves and resolves the cruciform DNA. The sequence is that of Crossover junction endodeoxyribonuclease RuvC from Yersinia enterocolitica serotype O:8 / biotype 1B (strain NCTC 13174 / 8081).